Consider the following 256-residue polypeptide: Trans-aconitate 2-methyltransferase (256 aa).

It belongs to the methyltransferase superfamily. Tam family.

The protein localises to the cytoplasm. The catalysed reaction is trans-aconitate + S-adenosyl-L-methionine = (E)-3-(methoxycarbonyl)pent-2-enedioate + S-adenosyl-L-homocysteine. In terms of biological role, catalyzes the S-adenosylmethionine monomethyl esterification of trans-aconitate. This chain is Trans-aconitate 2-methyltransferase, found in Rhizobium rhizogenes (strain K84 / ATCC BAA-868) (Agrobacterium radiobacter).